Reading from the N-terminus, the 873-residue chain is Zinc fingers and homeoboxes protein 1 (873 aa).

The disordered stretch occupies residues 24–63; sequence LISDLDEGPPVLTPVENTRAESISSDEEVHESVDSDNQQN. The residue at position 36 (T36) is a Phosphothreonine. S45, S47, and S48 each carry phosphoserine. 2 C2H2-type zinc fingers span residues 70–93 and 102–125; these read YECK…DSEH and YVCV…LKYH. K159 is covalently cross-linked (Glycyl lysine isopeptide (Lys-Gly) (interchain with G-Cter in SUMO2)). S202 carries the phosphoserine modification. Residues 202–236 form a disordered region; the sequence is SVEDVPEEKENEIKPDREEIVENPSSSASESNTST. The span at 212-221 shows a compositional bias: basic and acidic residues; it reads NEIKPDREEI. Over residues 223–236 the composition is skewed to low complexity; it reads ENPSSSASESNTST. The tract at residues 272-432 is required for dimerization; it reads NSNLIPKVLI…QNNIQKSQVP (161 aa). The tract at residues 272-564 is required for interaction with NFYA; sequence NSNLIPKVLI…AQPKQSWNPF (293 aa). Residues 284 to 346 constitute a DNA-binding region (homeobox 1); sequence NSIPTYNAAL…LKHGVSWTPE (63 aa). Glycyl lysine isopeptide (Lys-Gly) (interchain with G-Cter in SUMO2) cross-links involve residues K441, K454, K485, and K629. 2 consecutive DNA-binding regions (homeobox) follow at residues 464 to 526 and 569 to 630; these read SFGI…KSNQ and PQKF…EEKM. Disordered stretches follow at residues 626–667 and 732–770; these read KEEK…ICKK and SSMN…NNWD. Residue S648 is modified to Phosphoserine. Residues 660 to 722 constitute a DNA-binding region (homeobox 4); sequence STGKICKKTP…YAWKNGNLKW (63 aa). Positions 734–768 are required for nuclear localization; that stretch reads MNGLSSLRKRGRGRPKGRGRGRPRGRPRGSKRINN. Positions 740 to 764 are enriched in basic residues; that stretch reads LRKRGRGRPKGRGRGRPRGRPRGSK. S774 is modified (phosphoserine). Residues 777–832 constitute a DNA-binding region (homeobox 5); sequence KFKTGTAILKDYYLKHKFLNEQDLDELVNKSHMGYEQVREWFAERQRRSELGIELF. The tract at residues 829-873 is disordered; that stretch reads IELFEENEEEDEVIDDQEEDEEETDDSDTWEPPRHVKRKLSKSDD. The span at 831–857 shows a compositional bias: acidic residues; that stretch reads LFEENEEEDEVIDDQEEDEEETDDSDT. A required for repressor activity region spans residues 831-873; that stretch reads LFEENEEEDEVIDDQEEDEEETDDSDTWEPPRHVKRKLSKSDD. Residues 863–873 show a composition bias toward basic residues; that stretch reads HVKRKLSKSDD.

This sequence belongs to the ZHX family. In terms of assembly, forms homodimers. Heterodimer (via HD1 domain) with ZHX2 (via HD1 domain). Also forms a heterodimer with ZHX3 which is a prerequisite for repressor activity. Interacts with ATF7IP and NFYA. Interacts (via homeobox domains) with DNMT3B (via PWWP domain). Ubiquitously expressed. Expressed in podocytes.

The protein resides in the nucleus. In terms of biological role, acts as a transcriptional repressor. Increases DNMT3B-mediated repressive transcriptional activity when DNMT3B is tethered to DNA. May link molecule between DNMT3B and other co-repressor proteins. This Homo sapiens (Human) protein is Zinc fingers and homeoboxes protein 1 (ZHX1).